The sequence spans 92 residues: DNA-directed RNA polymerase subunit Rpo11 (92 aa).

It belongs to the archaeal Rpo11/eukaryotic RPB11/RPC19 RNA polymerase subunit family. Part of the RNA polymerase complex.

The protein localises to the cytoplasm. It carries out the reaction RNA(n) + a ribonucleoside 5'-triphosphate = RNA(n+1) + diphosphate. In terms of biological role, DNA-dependent RNA polymerase (RNAP) catalyzes the transcription of DNA into RNA using the four ribonucleoside triphosphates as substrates. This is DNA-directed RNA polymerase subunit Rpo11 from Saccharolobus islandicus (strain Y.N.15.51 / Yellowstone #2) (Sulfolobus islandicus).